The following is a 290-amino-acid chain: Signal peptidase I (290 aa).

The Cytoplasmic portion of the chain corresponds to 1–13 (MKFLRSVYAFCSS). The chain crosses the membrane as a helical span at residues 14–34 (WVGTIVIVLLVIFFIAQAFII). Residues 35-290 (PSRSMVGTLY…KIIKKENATH (256 aa)) lie on the Extracellular side of the membrane. Active-site residues include Ser38 and Lys106.

The protein belongs to the peptidase S26 family.

It is found in the cell membrane. The catalysed reaction is Cleavage of hydrophobic, N-terminal signal or leader sequences from secreted and periplasmic proteins.. The chain is Signal peptidase I (lepB) from Helicobacter pylori (strain ATCC 700392 / 26695) (Campylobacter pylori).